A 48-amino-acid chain; its full sequence is MARFEEAENRMFNVKICLKCNARNPAAATTCRKCGYTGLRFKAKEPRG.

Belongs to the eukaryotic ribosomal protein eL40 family.

The sequence is that of Large ribosomal subunit protein eL40 from Methanobrevibacter smithii (strain ATCC 35061 / DSM 861 / OCM 144 / PS).